A 194-amino-acid polypeptide reads, in one-letter code: dITP/XTP pyrophosphatase (194 aa).

8–13 (TNNPHK) is a substrate binding site. Catalysis depends on Asp69, which acts as the Proton acceptor. Residue Asp69 coordinates Mg(2+). Substrate contacts are provided by residues Thr70, 150 to 153 (FGYD), Lys173, and 178 to 179 (HR).

This sequence belongs to the HAM1 NTPase family. In terms of assembly, homodimer. Mg(2+) is required as a cofactor.

It catalyses the reaction XTP + H2O = XMP + diphosphate + H(+). The catalysed reaction is dITP + H2O = dIMP + diphosphate + H(+). The enzyme catalyses ITP + H2O = IMP + diphosphate + H(+). Functionally, pyrophosphatase that catalyzes the hydrolysis of nucleoside triphosphates to their monophosphate derivatives, with a high preference for the non-canonical purine nucleotides XTP (xanthosine triphosphate), dITP (deoxyinosine triphosphate) and ITP. Seems to function as a house-cleaning enzyme that removes non-canonical purine nucleotides from the nucleotide pool, thus preventing their incorporation into DNA/RNA and avoiding chromosomal lesions. The polypeptide is dITP/XTP pyrophosphatase (Porphyromonas gingivalis (strain ATCC BAA-308 / W83)).